A 440-amino-acid chain; its full sequence is D-serine dehydratase (440 aa).

Lysine 116 carries the post-translational modification N6-(pyridoxal phosphate)lysine.

This sequence belongs to the serine/threonine dehydratase family. DsdA subfamily. As to quaternary structure, monomer. Pyridoxal 5'-phosphate serves as cofactor.

It catalyses the reaction D-serine = pyruvate + NH4(+). This chain is D-serine dehydratase, found in Salmonella enteritidis PT4 (strain P125109).